Reading from the N-terminus, the 195-residue chain is MSHLFAHLARMKLIQRWPLMYNVRTENVQEHSLQVAMVAHALVIISNRKFGTTLDAHQATSLAIFHDASEILTGDLPTPVKYFNKEIEAEYKKIEAIAEQRMLDMVPDEFKEDYRSLFISDYADPTYKAIVKSADTLCAYLKCLEENRAGNTEFNTARKRLEAMLESNPNPAVKYFMDCFVPSFTLNLDEINKML.

Substrate-binding positions include 16–17 and histidine 31; that span reads RW. The 113-residue stretch at 28 to 140 folds into the HD domain; it reads VQEHSLQVAM…VKSADTLCAY (113 aa). A divalent metal cation is bound by residues histidine 31, histidine 66, and aspartate 67. Substrate is bound by residues aspartate 67, 75 to 78, and aspartate 135; that span reads DLPT. Aspartate 135 lines the a divalent metal cation pocket.

Belongs to the 5DNU family. In terms of assembly, homodimer. A divalent metal cation is required as a cofactor.

The protein resides in the cytoplasm. It carries out the reaction a 2'-deoxyribonucleoside 5'-phosphate + H2O = a 2'-deoxyribonucleoside + phosphate. Its function is as follows. Catalyzes the strictly specific dephosphorylation of 2'-deoxyribonucleoside 5'-monophosphates. This chain is 5'-deoxynucleotidase SO_2484, found in Shewanella oneidensis (strain ATCC 700550 / JCM 31522 / CIP 106686 / LMG 19005 / NCIMB 14063 / MR-1).